Here is a 352-residue protein sequence, read N- to C-terminus: MEGISIYTSDNYSEELGSGDYDSIKEPCFREENAHFNRIFLPTIYSIIFLTGIVGNGLVILVMGYQKKLRSMTDKYRLHLSVADLLFVITLPFWAVDAVANWYFGNFLCKAVHVIYTVNLYSSVLILAFISLDRYLAIVHATNSQRPRKLLAEKVVYVGVWIPALLLTIPDFIFANVSEAEDRYICDRFYPNDLWVVVFQFQHIMVGLILPGIVILSCYCIIISKLSHSKGHQKRKALKTTVILILAFFACWLPYYIGISIDSFILLEIIKQGCEFESTVHKWISITEALAFFHCCLNPILYAFLGAKFKSSAQHALTSVSRGSSLKILSKGKRGGHSSVSTESESSSFHSS.

The segment at 1-21 is important for chemokine binding and signaling; the sequence is MEGISIYTSDNYSEELGSGDY. Topologically, residues 1–38 are extracellular; sequence MEGISIYTSDNYSEELGSGDYDSIKEPCFREENAHFNR. Tyr-7 carries the sulfotyrosine modification. N-linked (GlcNAc...) asparagine glycosylation is present at Asn-11. Tyr-12 is modified (sulfotyrosine). O-linked (Xyl...) (chondroitin sulfate) serine glycosylation is present at Ser-18. Tyr-21 carries the post-translational modification Sulfotyrosine. Disulfide bonds link Cys-28/Cys-274 and Cys-109/Cys-186. A helical transmembrane segment spans residues 39 to 63; the sequence is IFLPTIYSIIFLTGIVGNGLVILVM. The Cytoplasmic portion of the chain corresponds to 64–77; it reads GYQKKLRSMTDKYR. A helical membrane pass occupies residues 78–99; that stretch reads LHLSVADLLFVITLPFWAVDAV. The tract at residues 94–97 is chemokine binding; sequence WAVD. Topologically, residues 100–110 are extracellular; sequence ANWYFGNFLCK. A helical membrane pass occupies residues 111–130; sequence AVHVIYTVNLYSSVLILAFI. Residues 113–117 form a chemokine binding region; the sequence is HVIYT. Topologically, residues 131-154 are cytoplasmic; it reads SLDRYLAIVHATNSQRPRKLLAEK. An Important for signaling motif is present at residues 133–135; sequence DRY. Residues 135–147 are involved in dimerization; when bound to chemokine; sequence YLAIVHATNSQRP. The helical transmembrane segment at 155-174 threads the bilayer; sequence VVYVGVWIPALLLTIPDFIF. Topologically, residues 175-195 are extracellular; the sequence is ANVSEAEDRYICDRFYPNDLW. A chemokine binding, important for signaling region spans residues 186–190; that stretch reads CDRFY. Residues 191-210 are involved in dimerization; that stretch reads PNDLWVVVFQFQHIMVGLIL. The chain crosses the membrane as a helical span at residues 196-216; the sequence is VVVFQFQHIMVGLILPGIVIL. Residues 217–241 lie on the Cytoplasmic side of the membrane; the sequence is SCYCIIISKLSHSKGHQKRKALKTT. The helical transmembrane segment at 242–261 threads the bilayer; sequence VILILAFFACWLPYYIGISI. Residues 262–282 are Extracellular-facing; it reads DSFILLEIIKQGCEFESTVHK. Positions 266–268 are involved in dimerization; that stretch reads LLE. A helical transmembrane segment spans residues 283–302; the sequence is WISITEALAFFHCCLNPILY. At 303 to 352 the chain is on the cytoplasmic side; the sequence is AFLGAKFKSSAQHALTSVSRGSSLKILSKGKRGGHSSVSTESESSSFHSS. 2 positions are modified to phosphoserine: Ser-319 and Ser-321. Residues Ser-324 and Ser-325 each carry the phosphoserine; by PKC and GRK6 modification. Positions 329-352 are disordered; the sequence is LSKGKRGGHSSVSTESESSSFHSS. A Phosphoserine; by GRK6 modification is found at Ser-330. Residue Lys-331 forms a Glycyl lysine isopeptide (Lys-Gly) (interchain with G-Cter in ubiquitin) linkage. Over residues 337–352 the composition is skewed to low complexity; it reads HSSVSTESESSSFHSS. Ser-339 carries the phosphoserine; by GRK6 modification. Residues Ser-348 and Ser-351 each carry the phosphoserine modification.

This sequence belongs to the G-protein coupled receptor 1 family. As to quaternary structure, monomer. Can form homodimers. Interacts with CD164. Interacts with ARRB2; the interaction is dependent on the C-terminal phosphorylation of CXCR4 and allows activation of MAPK1 and MAPK3. Interacts with ARR3; the interaction is dependent on the C-terminal phosphorylation of CXCR4 and modulates calcium mobilization. Interacts with RNF113A; the interaction, enhanced by CXCL12, promotes CXCR4 ubiquitination and subsequent degradation. Interacts (via the cytoplasmic C-terminal) with ITCH (via the WW domains I and II); the interaction, enhanced by CXCL12, promotes CXCR4 ubiquitination and leads to its degradation. Interacts with extracellular ubiquitin. Interacts with DBN1; this interaction is enhanced by antigenic stimulation. Following LPS binding, may form a complex with GDF5, HSP90AA1 and HSPA8. Post-translationally, phosphorylated on agonist stimulation. Rapidly phosphorylated on serine and threonine residues in the C-terminal. Phosphorylation at Ser-324 and Ser-325 leads to recruitment of ITCH, ubiquitination and protein degradation. Ubiquitinated after ligand binding, leading to its degradation. Ubiquitinated by ITCH at the cell membrane on agonist stimulation. The ubiquitin-dependent mechanism, endosomal sorting complex required for transport (ESCRT), then targets CXCR4 for lysosomal degradation. This process is dependent also on prior Ser-/Thr-phosphorylation in the C-terminal of CXCR4. Also binding of ARRB1 to STAM negatively regulates CXCR4 sorting to lysosomes though modulating ubiquitination of SFR5S. In terms of processing, sulfation is required for efficient binding of CXCL12/SDF-1alpha and promotes its dimerization. Post-translationally, O- and N-glycosylated. N-glycosylation can mask coreceptor function. The O-glycosylation chondroitin sulfate attachment does not affect interaction with CXCL12/SDF-1alpha nor its coreceptor activity.

It is found in the cell membrane. It localises to the cell junction. The protein resides in the early endosome. Its subcellular location is the late endosome. The protein localises to the lysosome. Its function is as follows. Receptor for the C-X-C chemokine CXCL12/SDF-1 that transduces a signal by increasing intracellular calcium ion levels and enhancing MAPK1/MAPK3 activation. Involved in the AKT signaling cascade. Plays a role in regulation of cell migration, e.g. during wound healing. Acts as a receptor for extracellular ubiquitin; leading to enhanced intracellular calcium ions and reduced cellular cAMP levels. Binds bacterial lipopolysaccharide (LPS) et mediates LPS-induced inflammatory response, including TNF secretion by monocytes. Involved in hematopoiesis and in cardiac ventricular septum formation. Also plays an essential role in vascularization of the gastrointestinal tract, probably by regulating vascular branching and/or remodeling processes in endothelial cells. Involved in cerebellar development. In the CNS, could mediate hippocampal-neuron survival. The sequence is that of C-X-C chemokine receptor type 4 (CXCR4) from Tupaia chinensis (Chinese tree shrew).